Here is a 361-residue protein sequence, read N- to C-terminus: 45 kDa calcium-binding protein (361 aa).

A signal peptide spans methionine 1–alanine 35. Asparagine 39 carries N-linked (GlcNAc...) asparagine glycosylation. EF-hand domains follow at residues arginine 97 to glutamate 132 and glutamate 136 to histidine 171. Serine 98 carries the post-translational modification Phosphoserine. 10 residues coordinate Ca(2+): aspartate 110, asparagine 112, aspartate 114, arginine 116, glutamate 121, aspartate 149, aspartate 151, aspartate 153, histidine 155, and glutamate 160. Threonine 192 carries the phosphothreonine modification. EF-hand domains are found at residues leucine 196–glycine 231, methionine 232–asparagine 267, tryptophan 277–tyrosine 312, and asparagine 313–serine 348. Residue aspartate 212 coordinates Ca(2+). Residue threonine 216 is modified to Phosphothreonine. Ca(2+) contacts are provided by glutamate 219, aspartate 245, aspartate 247, aspartate 249, glutamine 251, and glutamate 256. The residue at position 264 (threonine 264) is a Phosphothreonine. Residues aspartate 290, asparagine 292, and aspartate 294 each coordinate Ca(2+). At threonine 298 the chain carries Phosphothreonine. Residues glutamate 301, aspartate 326, asparagine 328, asparagine 330, histidine 332, and glutamate 337 each contribute to the Ca(2+) site. The tract at residues proline 308–phenylalanine 361 is necessary for intracellular retention in Golgi apparatus lumen.

The protein belongs to the CREC family. As to quaternary structure, a membrane-associated isoform interacts with STX3 and STXBP1. As to expression, a membrane-associated isoform is expressed in acini of the pancreas (at protein level). Ubiquitous.

Its subcellular location is the golgi apparatus lumen. In terms of biological role, a membrane-associated isoform may be involved in the exocytosis of zymogens by pancreatic acini. May regulate calcium-dependent activities in the endoplasmic reticulum lumen or post-ER compartment. This chain is 45 kDa calcium-binding protein (Sdf4), found in Rattus norvegicus (Rat).